The sequence spans 1853 residues: DNA-directed RNA polymerase II subunit RPB1 (1853 aa).

Zn(2+) is bound by residues Cys66, Cys69, Cys76, His79, Cys106, Cys109, Cys149, and Cys177. The segment at 256–268 (PAVVTFGSAKNQD) is lid loop. The interval 314 to 331 (NCIPGLPTATQKGGRPLK) is rudder loop. The Mg(2+) site is built by Asp489, Asp491, and Asp493. Positions 827-839 (PSEFFFHAMGGRE) are bridging helix. Lys1260 is covalently cross-linked (Glycyl lysine isopeptide (Lys-Gly) (interchain with G-Cter in ubiquitin)). Disordered regions lie at residues 1520-1568 (PWSP…PRTP) and 1589-1853 (SPHY…DPQN). 2 stretches are compositionally biased toward low complexity: residues 1589–1811 (SPHY…TPSP) and 1821–1853 (YSPS…DPQN). 26 repeat units span residues 1592–1598 (YSPTSPS), 1599–1605 (YSPTSPA), 1616–1622 (YSPTSPS), 1623–1629 (YSPTSPS), 1630–1636 (YSPTSPS), 1637–1643 (YSPTSPS), 1644–1650 (YSPTSPS), 1651–1657 (YSPTSPS), 1658–1664 (YSPTSPS), 1665–1671 (YSPTSPS), 1679–1685 (YSPTSPT), 1686–1692 (YSPTSPT), 1693–1699 (YSPTSPT), 1700–1706 (YSPTSPT), 1707–1713 (YSPTSPS), 1717–1723 (YSPSSPK), 1724–1730 (YSPSSPT), 1731–1737 (YSPTSPS), 1752–1758 (YSPSSPT), 1759–1765 (YTPSSPT), 1779–1785 (YSPTSPT), 1786–1792 (YSPTSPS), 1800–1806 (YSPTSPT), 1821–1827 (YSPSSPT), 1828–1834 (YSPSSPT), and 1842–1848 (YSPSSPT). A C-terminal domain (CTD); 26 X 7 AA approximate tandem repeats of Y-[ST]-P-[ST]-S-P-[AGKNQRST] region spans residues 1592–1848 (YSPTSPSYSP…SPSYSPSSPT (257 aa)).

The protein belongs to the RNA polymerase beta' chain family. Component of the RNA polymerase II (Pol II) complex consisting of 12 subunits. Interacts with sig-7. In terms of processing, the tandem 7 residues repeats in the C-terminal domain (CTD) can be highly phosphorylated. The phosphorylation activates Pol II. Phosphorylation occurs mainly at residues 'Ser-2' and 'Ser-5' of the heptapeptide repeat and starts at the 3- to 4-cell embryonic stage. This phosphorylation also occurs in the early stages of oocyte development and is not detected in oocytes arrested at the meiotic diakinesis stage. In the somatic lineage, phosphorylation at 'Ser-2' is mediated by cdk-12 downstream of cdk-9 whereas in the germline lineage cdk-12 phosphorylates 'Ser-2' independently of cdk-9. Phosphorylation is likely mediated by cdk-7. May be dephosphorylated by fcp-1 in diakinetic oocytes and in 1-cell and 2-cell embryos. Dephosphorylated at 'Ser-5' of the heptapeptide repeat by ssup-72. The phosphorylation state is believed to result from the balanced action of site-specific CTD kinases and phosphatase, and a 'CTD code' that specifies the position of Pol II within the transcription cycle has been proposed. Post-translationally, following transcription stress, the elongating form of RNA polymerase II (RNA pol IIo) is polyubiquitinated via 'Lys-63'-linkages on Lys-1260 at DNA damage sites without leading to degradation: ubiquitination promotes RNA pol IIo backtracking to allow access by the transcription-coupled nucleotide excision repair (TC-NER) machinery. Subsequent DEF1-dependent polyubiquitination by the elongin complex via 'Lys-48'-linkages may lead to proteasome-mediated degradation; presumably at stalled RNA pol II where TC-NER has failed, to halt global transcription and enable 'last resort' DNA repair pathways.

It is found in the nucleus. The protein resides in the chromosome. It catalyses the reaction RNA(n) + a ribonucleoside 5'-triphosphate = RNA(n+1) + diphosphate. In terms of biological role, DNA-dependent RNA polymerase catalyzes the transcription of DNA into RNA using the four ribonucleoside triphosphates as substrates. Largest and catalytic component of RNA polymerase II which synthesizes mRNA precursors and many functional non-coding RNAs. Forms the polymerase active center together with the second largest subunit. Pol II is the central component of the basal RNA polymerase II transcription machinery. It is composed of mobile elements that move relative to each other. RPB1 is part of the core element with the central large cleft, the clamp element that moves to open and close the cleft and the jaws that are thought to grab the incoming DNA template. At the start of transcription, a single-stranded DNA template strand of the promoter is positioned within the central active site cleft of Pol II. A bridging helix emanates from RPB1 and crosses the cleft near the catalytic site and is thought to promote translocation of Pol II by acting as a ratchet that moves the RNA-DNA hybrid through the active site by switching from straight to bent conformations at each step of nucleotide addition. During transcription elongation, Pol II moves on the template as the transcript elongates. Elongation is influenced by the phosphorylation status of the C-terminal domain (CTD) of Pol II largest subunit (RPB1), which serves as a platform for assembly of factors that regulate transcription initiation, elongation, termination and mRNA processing. Involved in the transcription of several genes including those involved in embryogenesis. This is DNA-directed RNA polymerase II subunit RPB1 from Caenorhabditis briggsae.